Reading from the N-terminus, the 353-residue chain is Cytochrome bc1 complex Rieske iron-sulfur subunit (353 aa).

The segment at 1-51 (MSSQDIPEENLPAEQDRPHGAAARPADETNPFADPGLPPHEPRVQDVDERA) is disordered. Positions 40 to 51 (HEPRVQDVDERA) are enriched in basic and acidic residues. 3 helical membrane passes run 60–80 (ALLF…FVAI), 99–119 (FALG…AVHW), and 164–184 (LIRN…VVLL). Residues 246-336 (KAALMIIRLE…IGVNDEGYLE (91 aa)) enclose the Rieske domain. Positions 279, 281, 298, and 301 each coordinate [2Fe-2S] cluster. C284 and C300 are oxidised to a cystine.

The protein belongs to the Rieske iron-sulfur protein family. As to quaternary structure, the cytochrome bc1 complex is composed of a cytochrome b (QcrB), the Rieske iron-sulfur protein (QcrA) and a diheme cytochrome c (QcrC) subunit. The cofactor is [2Fe-2S] cluster.

The protein resides in the cell membrane. Iron-sulfur subunit of the cytochrome bc1 complex, an essential component of the respiratory electron transport chain required for ATP synthesis. The bc1 complex catalyzes the oxidation of menaquinol and the reduction of cytochrome c in the respiratory chain. The bc1 complex operates through a Q-cycle mechanism that couples electron transfer to generation of the proton gradient that drives ATP synthesis. The sequence is that of Cytochrome bc1 complex Rieske iron-sulfur subunit (qcrA) from Streptomyces coelicolor (strain ATCC BAA-471 / A3(2) / M145).